The following is a 72-amino-acid chain: UPF0154 protein EF_1734 (72 aa).

Residues 4–26 (GWVVLIAVIALLVGAAGGFFLAR) traverse the membrane as a helical segment.

The protein belongs to the UPF0154 family.

The protein resides in the membrane. This Enterococcus faecalis (strain ATCC 700802 / V583) protein is UPF0154 protein EF_1734.